A 347-amino-acid polypeptide reads, in one-letter code: Phenylalanine--tRNA ligase alpha subunit (347 aa).

E261 is a Mg(2+) binding site.

The protein belongs to the class-II aminoacyl-tRNA synthetase family. Phe-tRNA synthetase alpha subunit type 1 subfamily. As to quaternary structure, tetramer of two alpha and two beta subunits. It depends on Mg(2+) as a cofactor.

The protein resides in the cytoplasm. The catalysed reaction is tRNA(Phe) + L-phenylalanine + ATP = L-phenylalanyl-tRNA(Phe) + AMP + diphosphate + H(+). The chain is Phenylalanine--tRNA ligase alpha subunit from Streptococcus equi subsp. equi (strain 4047).